Reading from the N-terminus, the 1333-residue chain is Vascular endothelial growth factor receptor 1 (1333 aa).

The first 22 residues, 1 to 22, serve as a signal peptide directing secretion; that stretch reads MVSCWDTAVLPYALLGCLLLTG. The Extracellular segment spans residues 23 to 759; it reads YGSGSKLKVP…QGTSDKSNLE (737 aa). 7 consecutive Ig-like C2-type domains span residues 32–124, 152–215, 231–328, 334–429, 430–550, 557–656, and 662–748; these read PELS…AESS, GRQL…VNGH, LDVQ…TSVH, FISV…NVKP, QIYE…RNIK, PNGF…EVLV, and PHLL…AYLT. Intrachain disulfides connect cysteine 53/cysteine 108 and cysteine 159/cysteine 208. N-linked (GlcNAc...) asparagine glycosylation is found at asparagine 101, asparagine 165, asparagine 197, and asparagine 252. Cysteine 253 and cysteine 312 are oxidised to a cystine. Asparagine 324, asparagine 418, asparagine 475, asparagine 517, asparagine 598, asparagine 626, asparagine 667, and asparagine 714 each carry an N-linked (GlcNAc...) asparagine glycan. Cystine bridges form between cysteine 455/cysteine 536 and cysteine 578/cysteine 637. A disulfide bridge links cysteine 683 with cysteine 732. A helical membrane pass occupies residues 760 to 781; the sequence is LITLTCTCVAATLFWLLLTLFI. The Cytoplasmic portion of the chain corresponds to 782–1333; sequence RKLKRSSSEV…SVVLYSSPPA (552 aa). The 331-residue stretch at 828 to 1158 folds into the Protein kinase domain; that stretch reads LKLGKSLGRG…ELVEKLGDLL (331 aa). Residues 834–842 and lysine 862 contribute to the ATP site; that span reads LGRGAFGKV. Residue tyrosine 915 is modified to Phosphotyrosine; by autocatalysis. The tract at residues 947–983 is disordered; it reads EPGLEQGQKPRLDSVSSSSVTSSSFPEDRSVSDVEGD. The segment covering 960–970 has biased composition (low complexity); sequence SVSSSSVTSSS. The active-site Proton acceptor is aspartate 1022. Phosphotyrosine; by autocatalysis occurs at positions 1053, 1169, 1213, 1242, 1322, and 1328.

It belongs to the protein kinase superfamily. Tyr protein kinase family. CSF-1/PDGF receptor subfamily. Interacts with VEGFA, VEGFB and PGF. Monomer in the absence of bound VEGFA, VEGFB or PGF. Homodimer in the presence of bound VEGFA, VEGFB and PGF. Can also form a heterodimer with KDR. Interacts (tyrosine phosphorylated) with CBL, CRK, GRB2, NCK1, PIK3R1, PLCG, PSEN1 and PTPN11. Probably interacts with PTPRB. Interacts with RACK1. Identified in a complex with CBL and CD2AP. N-glycosylated. Post-translationally, ubiquitinated after VEGFA-mediated autophosphorylation, leading to proteolytic degradation. In terms of processing, autophosphorylated on tyrosine residues upon ligand binding. Autophosphorylation occurs in trans, i.e. one subunit of the dimeric receptor phosphorylates tyrosine residues on the other subunit. Phosphorylation at Tyr-1169 is important for interaction with PLCG. Phosphorylation at Tyr-1213 is important for interaction with PIK3R1, PTPN11, GRB2, and PLCG. Phosphorylation at Tyr-1328 is important for endocytosis and for interaction with CBL, NCK1 and CRK. Is probably dephosphorylated by PTPRB.

The protein resides in the cell membrane. The protein localises to the endosome. The catalysed reaction is L-tyrosyl-[protein] + ATP = O-phospho-L-tyrosyl-[protein] + ADP + H(+). Present in an inactive conformation in the absence of bound ligand. Binding of VEGFA, VEGFB or PGF leads to dimerization and activation by autophosphorylation on tyrosine residues. Tyrosine-protein kinase that acts as a cell-surface receptor for VEGFA, VEGFB and PGF, and plays an essential role in the development of embryonic vasculature, the regulation of angiogenesis, cell survival, cell migration, macrophage function, chemotaxis, and cancer cell invasion. Acts as a positive regulator of postnatal retinal hyaloid vessel regression. May play an essential role as a negative regulator of embryonic angiogenesis by inhibiting excessive proliferation of endothelial cells. Can promote endothelial cell proliferation, survival and angiogenesis in adulthood. Its function in promoting cell proliferation seems to be cell-type specific. Promotes PGF-mediated proliferation of endothelial cells, and proliferation of some types of cancer cells, but does not promote proliferation of normal fibroblasts. Has very high affinity for VEGFA and relatively low protein kinase activity; may function as a negative regulator of VEGFA signaling by limiting the amount of free VEGFA and preventing its binding to KDR. Modulates KDR signaling by forming heterodimers with KDR. Ligand binding leads to the activation of several signaling cascades. Activation of PLCG leads to the production of the cellular signaling molecules diacylglycerol and inositol 1,4,5-trisphosphate and the activation of protein kinase C. Mediates phosphorylation of PIK3R1, the regulatory subunit of phosphatidylinositol 3-kinase, leading to the activation of phosphatidylinositol kinase and the downstream signaling pathway. Mediates activation of MAPK1/ERK2, MAPK3/ERK1 and the MAP kinase signaling pathway, as well as of the AKT1 signaling pathway. Phosphorylates SRC, YES1 and PLCG, and may also phosphorylate CBL. Promotes phosphorylation of AKT1 and PTK2/FAK1. This is Vascular endothelial growth factor receptor 1 (Flt1) from Mus musculus (Mouse).